We begin with the raw amino-acid sequence, 154 residues long: Large ribosomal subunit protein bL19 (154 aa).

The disordered stretch occupies residues 1 to 33; the sequence is MAADPKDTTVTDENTETAATAEVETVASAPTSP. Residues 16–27 are compositionally biased toward low complexity; that stretch reads ETAATAEVETVA.

This sequence belongs to the bacterial ribosomal protein bL19 family.

This protein is located at the 30S-50S ribosomal subunit interface and may play a role in the structure and function of the aminoacyl-tRNA binding site. This is Large ribosomal subunit protein bL19 from Parasynechococcus marenigrum (strain WH8102).